The primary structure comprises 372 residues: Partitioning defective 6 homolog beta (372 aa).

Serine 11 bears the Phosphoserine mark. The region spanning 16–96 (TMEVKSKFGA…PLLRIFIQKK (81 aa)) is the PB1 domain. The segment at 126 to 253 (RKKPHIVISM…ITVRPANQRN (128 aa)) is interaction with PARD3 and CDC42. The 18-residue stretch at 133–150 (ISMPQDFRPVSSIIDVDI) folds into the Pseudo-CRIB domain. The PDZ domain maps to 157–250 (RVRLYKYGTE…NLIITVRPAN (94 aa)). Over residues 253 to 272 (NNVVRNSRTSGSSGQSTDNS) the composition is skewed to polar residues. The interval 253–292 (NNVVRNSRTSGSSGQSTDNSLLGYPQQIEPSFEPEDEDSE) is disordered.

This sequence belongs to the PAR6 family. As to quaternary structure, interacts with PARD3. Interacts with GTP-bound forms of CDC42 and RAC1. Interacts with GTP-bound RHOQ/TC10. Interacts with PALS1. Interacts with the N-terminal part of PRKCI and PRKCZ. Part of a complex with PARD3, CDC42 or RAC1 and PRKCI or PRKCZ. Part of a complex with LLGL1 and PRKCI. Interacts with PARD3B. Interacts with ECT2. Expressed in pancreas and in both adult and fetal kidney. Weakly expressed in placenta and lung. Not expressed in other tissues.

The protein localises to the cytoplasm. Its subcellular location is the cell membrane. The protein resides in the cell junction. It localises to the tight junction. Its function is as follows. Adapter protein involved in asymmetrical cell division and cell polarization processes. Probably involved in formation of epithelial tight junctions. Association with PARD3 may prevent the interaction of PARD3 with F11R/JAM1, thereby preventing tight junction assembly. The PARD6-PARD3 complex links GTP-bound Rho small GTPases to atypical protein kinase C proteins. The sequence is that of Partitioning defective 6 homolog beta (PARD6B) from Homo sapiens (Human).